Reading from the N-terminus, the 294-residue chain is Shikimate dehydrogenase (NADP(+)) (294 aa).

Shikimate contacts are provided by residues 22-24 (SLS) and Ser-69. The active-site Proton acceptor is Lys-73. Shikimate-binding residues include Asn-94 and Asp-111. NADP(+)-binding positions include 135–139 (GAGGA) and Leu-236. Residue Tyr-238 participates in shikimate binding. Gly-260 provides a ligand contact to NADP(+).

This sequence belongs to the shikimate dehydrogenase family. As to quaternary structure, homodimer.

The enzyme catalyses shikimate + NADP(+) = 3-dehydroshikimate + NADPH + H(+). It participates in metabolic intermediate biosynthesis; chorismate biosynthesis; chorismate from D-erythrose 4-phosphate and phosphoenolpyruvate: step 4/7. In terms of biological role, involved in the biosynthesis of the chorismate, which leads to the biosynthesis of aromatic amino acids. Catalyzes the reversible NADPH linked reduction of 3-dehydroshikimate (DHSA) to yield shikimate (SA). The protein is Shikimate dehydrogenase (NADP(+)) of Streptococcus equi subsp. zooepidemicus (strain MGCS10565).